Here is a 126-residue protein sequence, read N- to C-terminus: MHKYLYIAAGGAAGSLCRYLVSGVTQRMFATSFPIGTFSVNMIGCLFFGLVTGLFEERLGLPPEMRLLILTGFMGAFTTFSTYMFESTNLIKSGQWAMTALNIGGQSILGFACIVGGLALGRLIVS.

Helical transmembrane passes span Tyr-4 to Val-24, Ile-35 to Phe-55, Leu-67 to Ser-87, and Ala-100 to Leu-120. Na(+) contacts are provided by Gly-75 and Thr-78.

It belongs to the fluoride channel Fluc/FEX (TC 1.A.43) family.

The protein localises to the cell inner membrane. The catalysed reaction is fluoride(in) = fluoride(out). With respect to regulation, na(+) is not transported, but it plays an essential structural role and its presence is essential for fluoride channel function. Its function is as follows. Fluoride-specific ion channel. Important for reducing fluoride concentration in the cell, thus reducing its toxicity. This chain is Fluoride-specific ion channel FluC, found in Maridesulfovibrio salexigens (strain ATCC 14822 / DSM 2638 / NCIMB 8403 / VKM B-1763) (Desulfovibrio salexigens).